An 89-amino-acid chain; its full sequence is MSITAERKAEVIKDNARDKGDTGSPEVQVAILTDRINTLTEHFKTHRKDNHSRRGLLMMVNKRRSLLDYLRKKDEGRYQALIAKLGLRK.

The segment covering 1 to 21 (MSITAERKAEVIKDNARDKGD) has biased composition (basic and acidic residues). Residues 1-26 (MSITAERKAEVIKDNARDKGDTGSPE) are disordered.

The protein belongs to the universal ribosomal protein uS15 family. Part of the 30S ribosomal subunit. Forms a bridge to the 50S subunit in the 70S ribosome, contacting the 23S rRNA.

Its function is as follows. One of the primary rRNA binding proteins, it binds directly to 16S rRNA where it helps nucleate assembly of the platform of the 30S subunit by binding and bridging several RNA helices of the 16S rRNA. Forms an intersubunit bridge (bridge B4) with the 23S rRNA of the 50S subunit in the ribosome. This is Small ribosomal subunit protein uS15 from Sphingopyxis alaskensis (strain DSM 13593 / LMG 18877 / RB2256) (Sphingomonas alaskensis).